The chain runs to 506 residues: Spindle pole body protein CSA6 (506 aa).

Disordered stretches follow at residues 18–121 (SPIK…PNEN), 252–276 (EKHN…VETQ), 329–429 (PSSP…YSIR), and 447–470 (KNDQ…EEKV). A compositionally biased stretch (basic and acidic residues) spans 38–48 (IDLRDYMDRQK). The span at 50–59 (SRNYSDSEYT) shows a compositional bias: polar residues. A compositionally biased stretch (basic and acidic residues) spans 63 to 72 (IKREKPETKQ). Residues 94–119 (PTKNYSQHVMQERSAPNSPQKKSLPN) are compositionally biased toward polar residues. 2 stretches are compositionally biased toward polar residues: residues 330–353 (SSPN…SVNL) and 361–389 (QPSH…NPSP). 2 stretches are compositionally biased toward basic and acidic residues: residues 412–422 (EWTREREERDG) and 461–470 (TDGKEEEEKV).

Its subcellular location is the cytoplasm. It is found in the cytoskeleton. The protein localises to the microtubule organizing center. The protein resides in the spindle pole body. Plays a role in mitotic spindle pole body organization, possibly at the point of spindle pole body separation. Required for mitotic exit. The chain is Spindle pole body protein CSA6 from Candida tropicalis (strain ATCC MYA-3404 / T1) (Yeast).